The following is a 305-amino-acid chain: Serine/threonine-protein phosphatase PP-X isozyme 2 (305 aa).

Residues aspartate 51, histidine 53, aspartate 79, and asparagine 111 each coordinate Mn(2+). The Proton donor role is filled by histidine 112. Residues histidine 161 and histidine 236 each coordinate Mn(2+).

The protein belongs to the PPP phosphatase family. PP-4 (PP-X) subfamily. Mn(2+) serves as cofactor. Ubiquitous, mostly expressed in root mersitems, flowers, and vascular tissues.

Its subcellular location is the plastid stroma. The enzyme catalyses O-phospho-L-seryl-[protein] + H2O = L-seryl-[protein] + phosphate. The catalysed reaction is O-phospho-L-threonyl-[protein] + H2O = L-threonyl-[protein] + phosphate. The protein is Serine/threonine-protein phosphatase PP-X isozyme 2 (PPX2) of Arabidopsis thaliana (Mouse-ear cress).